The sequence spans 185 residues: Ribosome-recycling factor (185 aa).

The protein belongs to the RRF family.

Its subcellular location is the cytoplasm. Responsible for the release of ribosomes from messenger RNA at the termination of protein biosynthesis. May increase the efficiency of translation by recycling ribosomes from one round of translation to another. The sequence is that of Ribosome-recycling factor from Zymomonas mobilis subsp. mobilis (strain ATCC 31821 / ZM4 / CP4).